The sequence spans 237 residues: E3 ubiquitin-protein ligase RNF166 (237 aa).

The RING-type zinc-finger motif lies at Cys-33 to Arg-73. Positions 98, 101, 113, and 117 each coordinate Zn(2+). Residues Cys-98 to Cys-117 form a C2HC RNF-type zinc finger. The UIM domain occupies Asp-221–Asn-237.

Its subcellular location is the cytoplasm. It carries out the reaction S-ubiquitinyl-[E2 ubiquitin-conjugating enzyme]-L-cysteine + [acceptor protein]-L-lysine = [E2 ubiquitin-conjugating enzyme]-L-cysteine + N(6)-ubiquitinyl-[acceptor protein]-L-lysine.. It participates in protein modification; protein ubiquitination. In terms of biological role, E3 ubiquitin-protein ligase that promotes the ubiquitination of different substrates. In turn, participates in different biological processes including interferon production or autophagy. Plays a role in the activation of RNA virus-induced interferon-beta production by promoting the ubiquitination of TRAF3 and TRAF6. Also plays a role in the early recruitment of autophagy adapters to bacteria. Mediates 'Lys-29' and 'Lys-33'-linked ubiquitination of SQSTM1 leading to xenophagic targeting of bacteria and inhibition of their replication. This chain is E3 ubiquitin-protein ligase RNF166 (RNF166), found in Homo sapiens (Human).